Consider the following 345-residue polypeptide: Hydroxymethylglutaryl-CoA synthase (345 aa).

Asp28 contacts (3S)-3-hydroxy-3-methylglutaryl-CoA. The active-site Proton donor/acceptor is Glu80. (3S)-3-hydroxy-3-methylglutaryl-CoA contacts are provided by Cys112 and Thr153. Cys112 (acyl-thioester intermediate) is an active-site residue. Arg199 contributes to the CoA binding site. Thr201 and His234 together coordinate (3S)-3-hydroxy-3-methylglutaryl-CoA. The active-site Proton donor/acceptor is His234. Lys239 contacts CoA. (3S)-3-hydroxy-3-methylglutaryl-CoA-binding residues include Arg243, Asn266, and Ser296.

Belongs to the thiolase-like superfamily. Archaeal HMG-CoA synthase family. In terms of assembly, interacts with acetoacetyl-CoA thiolase that catalyzes the precedent step in the pathway and with a DUF35 protein. The acetoacetyl-CoA thiolase/HMG-CoA synthase complex channels the intermediate via a fused CoA-binding site, which allows for efficient coupling of the endergonic thiolase reaction with the exergonic HMGCS reaction.

The catalysed reaction is acetoacetyl-CoA + acetyl-CoA + H2O = (3S)-3-hydroxy-3-methylglutaryl-CoA + CoA + H(+). Its pathway is metabolic intermediate biosynthesis; (R)-mevalonate biosynthesis; (R)-mevalonate from acetyl-CoA: step 2/3. Catalyzes the condensation of acetyl-CoA with acetoacetyl-CoA to form 3-hydroxy-3-methylglutaryl-CoA (HMG-CoA). Functions in the mevalonate (MVA) pathway leading to isopentenyl diphosphate (IPP), a key precursor for the biosynthesis of isoprenoid compounds that are building blocks of archaeal membrane lipids. This Methanocaldococcus jannaschii (strain ATCC 43067 / DSM 2661 / JAL-1 / JCM 10045 / NBRC 100440) (Methanococcus jannaschii) protein is Hydroxymethylglutaryl-CoA synthase.